Consider the following 506-residue polypeptide: Anaerobic nitric oxide reductase transcription regulator NorR (506 aa).

Asp57 carries the 4-aspartylphosphate modification. The region spanning 187–416 (MIGLSPAMTQ…LEHAIHRAVV (230 aa)) is the Sigma-54 factor interaction domain. ATP contacts are provided by residues 215 to 222 (GETGTGKE) and 278 to 287 (ADNGTLFLDE). Residues 481 to 500 (WAASARALETDVANLHRLAK) constitute a DNA-binding region (H-T-H motif).

It functions in the pathway nitrogen metabolism; nitric oxide reduction. Required for the expression of anaerobic nitric oxide (NO) reductase, acts as a transcriptional activator for at least the norVW operon. Activation also requires sigma-54. This is Anaerobic nitric oxide reductase transcription regulator NorR from Salmonella schwarzengrund (strain CVM19633).